Reading from the N-terminus, the 560-residue chain is Bifunctional NAD(P)H-hydrate repair enzyme (560 aa).

The interval 1 to 241 (MLSRLSERCT…WMTAPERMRV (241 aa)) is NAD(P)H-hydrate epimerase. The YjeF N-terminal domain maps to 29–235 (LRDAEPAAAA…SLGLEDWMTA (207 aa)). An NADPHX 1; for epimerase activity region spans residues 77–81 (NNGGD). K(+) is bound by residues Asn78 and Asp145. Residues 149 to 155 (GTGICGP) are NADPHX 1; for epimerase activity. Tyr160 and Asp178 together coordinate (6S)-NADPHX. Ser181 contacts K(+). A YjeF C-terminal domain is found at 249–547 (LDDVYEYFGI…HRVPLIVNAS (299 aa)). Residues 249–560 (LDDVYEYFGI…PASRQRPSGQ (312 aa)) are ADP-dependent (S)-NAD(P)H-hydrate dehydratase. Gly351 contributes to the (6S)-NADPHX binding site. The NADPHX 2; for dehydratase activity stretch occupies residues 417-423 (HPGEAAR). Residues 454–458 (KGPGT) and 475–484 (NAGMASGGMG) contribute to the ADP site. A (6S)-NADPHX-binding site is contributed by Asp485.

In the N-terminal section; belongs to the NnrE/AIBP family. This sequence in the C-terminal section; belongs to the NnrD/CARKD family. K(+) is required as a cofactor.

The catalysed reaction is (6S)-NADHX + ADP = AMP + phosphate + NADH + H(+). It catalyses the reaction (6S)-NADPHX + ADP = AMP + phosphate + NADPH + H(+). It carries out the reaction (6R)-NADHX = (6S)-NADHX. The enzyme catalyses (6R)-NADPHX = (6S)-NADPHX. Its function is as follows. Bifunctional enzyme that catalyzes the epimerization of the S- and R-forms of NAD(P)HX and the dehydration of the S-form of NAD(P)HX at the expense of ADP, which is converted to AMP. This allows the repair of both epimers of NAD(P)HX, a damaged form of NAD(P)H that is a result of enzymatic or heat-dependent hydration. The sequence is that of Bifunctional NAD(P)H-hydrate repair enzyme from Leishmania major.